An 842-amino-acid polypeptide reads, in one-letter code: Elongation factor 2 (842 aa).

Residues 17–253 enclose the tr-type G domain; the sequence is TNVRNMSVIA…LWGDSYFNPK (237 aa). GTP-binding positions include 26–33, 158–161, and 213–215; these read AHVDHGKS, NKVD, and SGL. Diphthamide is present on His699.

The protein belongs to the TRAFAC class translation factor GTPase superfamily. Classic translation factor GTPase family. EF-G/EF-2 subfamily.

Its subcellular location is the cytoplasm. It carries out the reaction GTP + H2O = GDP + phosphate + H(+). Catalyzes the GTP-dependent ribosomal translocation step during translation elongation. During this step, the ribosome changes from the pre-translocational (PRE) to the post-translocational (POST) state as the newly formed A-site-bound peptidyl-tRNA and P-site-bound deacylated tRNA move to the P and E sites, respectively. Catalyzes the coordinated movement of the two tRNA molecules, the mRNA and conformational changes in the ribosome. The sequence is that of Elongation factor 2 (EFT1) from Naumovozyma castellii (Yeast).